The sequence spans 118 residues: MHEYSIVSALIEQCEQYAKANQATKVTRVEIKLGVMSGVEPALLQTAFETFKLDGICREAKLCMTLQPLVIKCADCQQESVLDERSIVCPACNSYHTRVLDGEEMLLMQLEMEQAEDA.

His-2 provides a ligand contact to Ni(2+). Positions 73, 76, 89, and 92 each coordinate Zn(2+).

This sequence belongs to the HypA/HybF family.

Involved in the maturation of [NiFe] hydrogenases. Required for nickel insertion into the metal center of the hydrogenase. This Shewanella oneidensis (strain ATCC 700550 / JCM 31522 / CIP 106686 / LMG 19005 / NCIMB 14063 / MR-1) protein is Hydrogenase maturation factor HypA.